We begin with the raw amino-acid sequence, 307 residues long: Elongation factor Ts (307 aa).

Residues 80–83 form an involved in Mg(2+) ion dislocation from EF-Tu region; that stretch reads TDFV.

Belongs to the EF-Ts family.

Its subcellular location is the cytoplasm. Functionally, associates with the EF-Tu.GDP complex and induces the exchange of GDP to GTP. It remains bound to the aminoacyl-tRNA.EF-Tu.GTP complex up to the GTP hydrolysis stage on the ribosome. This Xanthobacter autotrophicus (strain ATCC BAA-1158 / Py2) protein is Elongation factor Ts.